Reading from the N-terminus, the 215-residue chain is Adenylate kinase (215 aa).

10-15 (GAGKGT) provides a ligand contact to ATP. The segment at 30–59 (STGDMLRSAIKSGSELGKKAKQVMDAGQLV) is NMP. AMP contacts are provided by residues threonine 31, arginine 36, 57–59 (QLV), 85–88 (GFPR), and glutamine 92. Residues 122–159 (GRRVHPGSGRVYHVEHNPPKVEGKDDETGEDLVVRPDD) are LID. ATP contacts are provided by residues arginine 123 and 132-133 (VY). Positions 128 to 151 (GSGRVYHVEHNPPKVEGKDDETGE) are disordered. Over residues 133–144 (YHVEHNPPKVEG) the composition is skewed to basic and acidic residues. 2 residues coordinate AMP: arginine 156 and arginine 167. Positions 195 to 215 (KIDGTQPVERVSEQLGDLLRK) are disordered. Residue glutamine 200 coordinates ATP.

It belongs to the adenylate kinase family. Monomer.

Its subcellular location is the cytoplasm. The catalysed reaction is AMP + ATP = 2 ADP. Its pathway is purine metabolism; AMP biosynthesis via salvage pathway; AMP from ADP: step 1/1. Catalyzes the reversible transfer of the terminal phosphate group between ATP and AMP. Plays an important role in cellular energy homeostasis and in adenine nucleotide metabolism. In Idiomarina loihiensis (strain ATCC BAA-735 / DSM 15497 / L2-TR), this protein is Adenylate kinase.